Here is a 127-residue protein sequence, read N- to C-terminus: MSSICHTLSGLISSNLIGLCVKTAPKILRIFVRLCTYTFYNLLKSTGLALGLIISSYNKVVKKSLKILPVTSGKKYLAAKANLFFSPSGLAEANFAVSSFNILAVNSGVTLSPVSLKTTPCLTHWYN.

This is an uncharacterized protein from Saccharomyces cerevisiae (strain ATCC 204508 / S288c) (Baker's yeast).